The following is a 1309-amino-acid chain: DNA repair protein RAD9 (1309 aa).

Residues M1–A19 show a composition bias toward polar residues. Positions M1 to P39 are disordered. Phosphoserine occurs at positions 26, 56, and 205. T218 carries the post-translational modification Phosphothreonine. Position 248 is a phosphoserine (S248). The segment at N280–S299 is disordered. A compositionally biased stretch (basic and acidic residues) spans I284–S299. Residues S312 and S315 each carry the phosphoserine modification. Residues N342–N365 are disordered. The segment covering S343–N352 has biased composition (polar residues). Residue S462 is modified to Phosphoserine. A phosphothreonine mark is found at T471 and T474. Residues P490–E512 are disordered. A compositionally biased stretch (polar residues) spans E491–P508. The residue at position 568 (S568) is a Phosphoserine. 2 disordered regions span residues K636–D655 and I691–L731. Residues L642 to D655 are compositionally biased toward basic and acidic residues. S729 is modified (phosphoserine). A BRCT domain is found at R994 to Y1122.

In terms of assembly, physically associates with RAD53.

The protein resides in the nucleus. Its function is as follows. Essential for cell cycle arrest at the G2 stage following DNA damage by X-irradiation or inactivation of DNA ligase. This chain is DNA repair protein RAD9 (RAD9), found in Saccharomyces cerevisiae (strain ATCC 204508 / S288c) (Baker's yeast).